The sequence spans 765 residues: FHF complex subunit HOOK interacting protein 2A (765 aa).

Disordered regions lie at residues 193–236 (TLKG…DHLS) and 532–561 (TDIS…KNDG). 2 stretches are compositionally biased toward polar residues: residues 196-208 (GQDS…GQSR) and 535-550 (SPEN…SSSP).

This sequence belongs to the FHIP family. Expressed in all tissues tested, highly expressed brain. In terms of tissue distribution, only detected at high levels in testis.

In terms of biological role, required for proper functioning of the nervous system. This chain is FHF complex subunit HOOK interacting protein 2A, found in Homo sapiens (Human).